Reading from the N-terminus, the 647-residue chain is Serine/threonine-protein kinase PLK3 (647 aa).

Residues 1-56 form a disordered region; that stretch reads MEPAAGFLSPRPFPRAAAPSSPPAGPGPPASASPRSEPGVLAGPQTPDASRLITDP. Positions 20–31 are enriched in pro residues; it reads SSPPAGPGPPAS. The 253-residue stretch at 62-314 folds into the Protein kinase domain; that stretch reads YIKGRLLGKG…IEQILRHDFF (253 aa). Residues 68 to 76 and K91 each bind ATP; that span reads LGKGGFARC. The Proton acceptor role is filled by D185. POLO box domains follow at residues 464 to 542 and 563 to 646; these read WVSK…YMEQ and LLLQ…DRSP.

Belongs to the protein kinase superfamily. Ser/Thr protein kinase family. CDC5/Polo subfamily. As to quaternary structure, interacts with GOLGB1. Interacts (via the POLO-box domain) with CIB1; leading to inhibit PLK3 kinase activity. Post-translationally, phosphorylated in an ATM-dependent manner following DNA damage. Phosphorylated as cells enter mitosis and dephosphorylated as cells exit mitosis. As to expression, constitutively expressed in post-mitotic neurons.

The protein resides in the cell projection. It localises to the dendrite. The protein localises to the cytoplasm. It is found in the nucleus. Its subcellular location is the nucleolus. The protein resides in the golgi apparatus. It localises to the cytoskeleton. The protein localises to the microtubule organizing center. It is found in the centrosome. The enzyme catalyses L-seryl-[protein] + ATP = O-phospho-L-seryl-[protein] + ADP + H(+). It carries out the reaction L-threonyl-[protein] + ATP = O-phospho-L-threonyl-[protein] + ADP + H(+). In terms of biological role, serine/threonine-protein kinase involved in cell cycle regulation, response to stress and Golgi disassembly. Polo-like kinases act by binding and phosphorylating proteins that are already phosphorylated on a specific motif recognized by the POLO box domains. Phosphorylates ATF2, BCL2L1, CDC25A, CDC25C, CHEK2, HIF1A, JUN, p53/TP53, p73/TP73, PTEN, TOP2A and VRK1. Involved in cell cycle regulation: required for entry into S phase and cytokinesis. Phosphorylates BCL2L1, leading to regulate the G2 checkpoint and progression to cytokinesis during mitosis. Plays a key role in response to stress: rapidly activated upon stress stimulation, such as ionizing radiation, reactive oxygen species (ROS), hyperosmotic stress, UV irradiation and hypoxia. Involved in DNA damage response and G1/S transition checkpoint by phosphorylating CDC25A, p53/TP53 and p73/TP73. Phosphorylates p53/TP53 in response to reactive oxygen species (ROS), thereby promoting p53/TP53-mediated apoptosis. Phosphorylates CHEK2 in response to DNA damage, promoting the G2/M transition checkpoint. Phosphorylates the transcription factor p73/TP73 in response to DNA damage, leading to inhibit p73/TP73-mediated transcriptional activation and pro-apoptotic functions. Phosphorylates HIF1A and JUN is response to hypoxia. Phosphorylates ATF2 following hyperosmotic stress in corneal epithelium. Also involved in Golgi disassembly during the cell cycle: part of a MEK1/MAP2K1-dependent pathway that induces Golgi fragmentation during mitosis by mediating phosphorylation of VRK1. May participate in endomitotic cell cycle, a form of mitosis in which both karyokinesis and cytokinesis are interrupted and is a hallmark of megakaryocyte differentiation, via its interaction with CIB1. The protein is Serine/threonine-protein kinase PLK3 (Plk3) of Rattus norvegicus (Rat).